Here is a 190-residue protein sequence, read N- to C-terminus: Female-specific histamine-binding protein 2 (190 aa).

The N-terminal stretch at M1–G19 is a signal peptide. 12 residues coordinate histamine: S39, D43, Y55, D58, W61, E101, F117, Y119, F127, D139, E154, and W156. 2 disulfides stabilise this stretch: C67/C188 and C138/C167.

Belongs to the calycin superfamily. Histamine-binding salivary protein family. As to quaternary structure, monomer. As to expression, expressed in salivary glands.

The protein resides in the secreted. In terms of biological role, salivary tick protein that acts by scavenging histamine at the wound site, outcompeting histamine receptors for histamine, thereby overcoming host inflammatory responses. Binds histamine with a high-affinity (Kd=1.7 nM). Contains two binding histamine sites (H and L), that appear to bind histamine with differing affinities (high and low). The protein is Female-specific histamine-binding protein 2 of Rhipicephalus appendiculatus (Brown ear tick).